A 196-amino-acid chain; its full sequence is Pantothenic acid transporter PanT (196 aa).

A run of 6 helical transmembrane segments spans residues 10–30 (AILA…QFVI), 35–55 (FPVK…ILGW), 58–78 (GAFL…IVTT), 99–119 (WGLF…YFVY), 131–151 (AAFA…FLFF), and 161–181 (YLLG…AVIL).

In E.coli forms a stable energy-coupling factor (ECF) transporter complex composed of 2 membrane-embedded substrate-binding protein (S component), 2 ATP-binding proteins (A and A' components) and 2 transmembrane proteins (T component), probably with a stoichiometry of 2:1:1:2. May be able to interact with more than 1 S component at a time.

It is found in the cell membrane. Functionally, probably a pantothenic acid-binding protein that interacts with the energy-coupling factor (ECF) ABC-transporter complex. Unlike classic ABC transporters this ECF transporter provides the energy necessary to transport a number of different substrates. The substrates themselves are bound by transmembrane, not extracytoplasmic soluble proteins. This is Pantothenic acid transporter PanT (panT) from Lactococcus lactis subsp. cremoris (strain MG1363).